The chain runs to 495 residues: NADP/NAD-dependent aldehyde dehydrogenase PuuC (495 aa).

244–249 (GSTRTG) provides a ligand contact to NAD(+). Active-site residues include E267 and C302.

It belongs to the aldehyde dehydrogenase family.

The enzyme catalyses an aldehyde + NADP(+) + H2O = a carboxylate + NADPH + 2 H(+). It catalyses the reaction an aldehyde + NAD(+) + H2O = a carboxylate + NADH + 2 H(+). It carries out the reaction 4-(gamma-L-glutamylamino)butanal + NADP(+) + H2O = 4-(gamma-L-glutamylamino)butanoate + NADPH + 2 H(+). The catalysed reaction is 4-(gamma-L-glutamylamino)butanal + NAD(+) + H2O = 4-(gamma-L-glutamylamino)butanoate + NADH + 2 H(+). It participates in amine and polyamine degradation; putrescine degradation; 4-aminobutanoate from putrescine: step 3/4. Its activity is regulated as follows. Lithium ions exhibits the highest inhibition (97%). To a lesser extent (5-20%), potassium, sodium, and ammonium ions also inhibit PuuC activity. Transition metals, such as copper and zinc ions inhibit PuuC activity by more than 90%. The presence of heavy metals (mercury, silver) or sodium hydrogensulfite in the reaction mixture completely inactivate PuuC; in contrast, disulfide reductants such as DTT and 2-mercaptoethanol significantly increase its activity by 75% and 27%, respectively. Functionally, catalyzes the oxidation of 3-hydroxypropionaldehyde (3-HPA) to 3-hydroxypropionic acid (3-HP). It acts preferentially with NAD but can also use NADP. 3-HPA appears to be the most suitable substrate for PuuC followed by isovaleraldehyde, propionaldehyde, butyraldehyde, and valeraldehyde. It might play a role in propionate and/or acetic acid metabolisms. Also involved in the breakdown of putrescine through the oxidation of gamma-Glu-gamma-aminobutyraldehyde to gamma-Glu-gamma-aminobutyrate (gamma-Glu-GABA). The sequence is that of NADP/NAD-dependent aldehyde dehydrogenase PuuC from Escherichia coli (strain K12).